The sequence spans 543 residues: Allantoate permease (543 aa).

The Cytoplasmic portion of the chain corresponds to 1 to 80 (MSADASTNSN…PEEDRKLRWK (80 aa)). The helical transmembrane segment at 81 to 97 (IDYCMFPLMCILYAVQF) threads the bilayer. At 98–123 (MDKISTSSAAVMGLRTDLKMHGDQYS) the chain is on the extracellular side. A helical membrane pass occupies residues 124 to 145 (WVTSAFYFGYLFMNLGPVQFIF). Residues 146-154 (QRTSHMSKM) are Cytoplasmic-facing. Residues 155-171 (LAVFIVIWGMLLALHAA) form a helical membrane-spanning segment. At 172 to 178 (PTVKYPS) the chain is on the extracellular side. Residues 179 to 200 (FIVLRVLLGCAESVVTPCFTII) traverse the membrane as a helical segment. Residues 201-213 (TAQYWKTEEQFTR) are Cytoplasmic-facing. The chain crosses the membrane as a helical span at residues 214-237 (VSIWFGMNGLGSILINAIAYGVYI). Over 238-248 (HQDSYAIKGWR) the chain is Extracellular. The chain crosses the membrane as a helical span at residues 249–269 (TLFVITGVITIFIGILIFLWI). At 270-317 (PDDPSKARFLSKREKLMVVQRIRSNQQGFGNHEIKKYQIIEALKDVRT) the chain is on the cytoplasmic side. The chain crosses the membrane as a helical span at residues 318 to 342 (WLYFLFTVSSNIPNGGISSFMSILL). The Extracellular portion of the chain corresponds to 343–352 (NSDFGYSSKE). The chain crosses the membrane as a helical span at residues 353-377 (TLLMGLPTGAVELVGCPLFGILAVY). The Cytoplasmic segment spans residues 378–389 (AANKKIPFWKYK). Residues 390–411 (LSWAIFAAVLALIASCMLGFAT) form a helical membrane-spanning segment. Residues 412–417 (NSKKAR) are Extracellular-facing. The helical transmembrane segment at 418–435 (LAGAYLWYISPVSFICVL) threads the bilayer. Over 436-453 (SNISANSSGYSKKWTVSS) the chain is Cytoplasmic. The helical transmembrane segment at 454-472 (INLVAYAAANLAGPQTFIA) threads the bilayer. Residues 473–482 (KQAPKYHGAK) lie on the Extracellular side of the membrane. The chain crosses the membrane as a helical span at residues 483–504 (VAMVVCYAVMIVLLSILLIVNL). Residues 505-543 (RENKRRDKIAAERGFPEETENLEFSDLTDFENPNFRYTL) lie on the Cytoplasmic side of the membrane.

The protein belongs to the major facilitator superfamily. Allantoate permease family.

The protein localises to the membrane. Its function is as follows. Component of the allantoate transport system. In Saccharomyces cerevisiae (strain ATCC 204508 / S288c) (Baker's yeast), this protein is Allantoate permease (DAL5).